The sequence spans 507 residues: Maturase K (507 aa).

Belongs to the intron maturase 2 family. MatK subfamily.

It localises to the plastid. The protein localises to the chloroplast. Functionally, usually encoded in the trnK tRNA gene intron. Probably assists in splicing its own and other chloroplast group II introns. In Liriodendron chinense (Chinese tulip tree), this protein is Maturase K.